We begin with the raw amino-acid sequence, 156 residues long: ATP synthase subunit b (156 aa).

Residues 1 to 21 traverse the membrane as a helical segment; sequence MSINATLLIQIIAFVLLIWFV.

The protein belongs to the ATPase B chain family. As to quaternary structure, F-type ATPases have 2 components, F(1) - the catalytic core - and F(0) - the membrane proton channel. F(1) has five subunits: alpha(3), beta(3), gamma(1), delta(1), epsilon(1). F(0) has three main subunits: a(1), b(2) and c(10-14). The alpha and beta chains form an alternating ring which encloses part of the gamma chain. F(1) is attached to F(0) by a central stalk formed by the gamma and epsilon chains, while a peripheral stalk is formed by the delta and b chains.

Its subcellular location is the cell inner membrane. F(1)F(0) ATP synthase produces ATP from ADP in the presence of a proton or sodium gradient. F-type ATPases consist of two structural domains, F(1) containing the extramembraneous catalytic core and F(0) containing the membrane proton channel, linked together by a central stalk and a peripheral stalk. During catalysis, ATP synthesis in the catalytic domain of F(1) is coupled via a rotary mechanism of the central stalk subunits to proton translocation. Its function is as follows. Component of the F(0) channel, it forms part of the peripheral stalk, linking F(1) to F(0). This chain is ATP synthase subunit b, found in Hydrogenovibrio crunogenus (strain DSM 25203 / XCL-2) (Thiomicrospira crunogena).